Reading from the N-terminus, the 690-residue chain is UvrABC system protein B (690 aa).

Residues Gln-30–Arg-188 enclose the Helicase ATP-binding domain. Gly-43 to Thr-50 serves as a coordination point for ATP. Residues Tyr-96–Ile-119 carry the Beta-hairpin motif. The 167-residue stretch at Gln-435–Leu-601 folds into the Helicase C-terminal domain. The region spanning Tyr-641–Ala-676 is the UVR domain.

Belongs to the UvrB family. As to quaternary structure, forms a heterotetramer with UvrA during the search for lesions. Interacts with UvrC in an incision complex.

The protein resides in the cytoplasm. In terms of biological role, the UvrABC repair system catalyzes the recognition and processing of DNA lesions. A damage recognition complex composed of 2 UvrA and 2 UvrB subunits scans DNA for abnormalities. Upon binding of the UvrA(2)B(2) complex to a putative damaged site, the DNA wraps around one UvrB monomer. DNA wrap is dependent on ATP binding by UvrB and probably causes local melting of the DNA helix, facilitating insertion of UvrB beta-hairpin between the DNA strands. Then UvrB probes one DNA strand for the presence of a lesion. If a lesion is found the UvrA subunits dissociate and the UvrB-DNA preincision complex is formed. This complex is subsequently bound by UvrC and the second UvrB is released. If no lesion is found, the DNA wraps around the other UvrB subunit that will check the other stand for damage. This Chlorobium phaeobacteroides (strain BS1) protein is UvrABC system protein B.